A 706-amino-acid polypeptide reads, in one-letter code: Choline transporter-like protein 2 (706 aa).

Residues 1-33 (MGGERQHYYGKHGTPQKYDPTFKGPIYHRGCTD) lie on the Cytoplasmic side of the membrane. A Phosphothreonine modification is found at T14. The chain crosses the membrane as a helical span at residues 34–54 (VICCVFLLLAIVGYVAVGIIA). The Extracellular portion of the chain corresponds to 55–232 (WTHGDPRKVI…RIFEDYTVSW (178 aa)). Residues N187 and N200 are each glycosylated (N-linked (GlcNAc...) asparagine). Residues 233 to 253 (YWIIIGLVIAMVLSLLFIILL) form a helical membrane-spanning segment. The Cytoplasmic segment spans residues 254–256 (RFL). The chain crosses the membrane as a helical span at residues 257–277 (AGIMVWVMIVMVILVLGYGIF). Topologically, residues 278–315 (HCYMEYSRLRGEAGSDISLVDLGFQTDLRVYLHLRQTW) are extracellular. The helical transmembrane segment at 316–336 (MAFMIILSILEVIIILLLIFL) threads the bilayer. The Cytoplasmic portion of the chain corresponds to 337 to 364 (RKRILIAIALIKEASRAVGYVMCSMLYP). Residues 365–385 (LVTFLLLCLCIAYWASTAIFL) form a helical membrane-spanning segment. Topologically, residues 386–440 (STSNEAVYKIFSDTDCQAVGKTCNPENFSSSSEFHLCPGAHCQFAFYGGESTYHR) are extracellular. A helical membrane pass occupies residues 441–461 (ALLGLQIFNAFMFFWLANFVL). Residues 462-504 (ALGQVTLAGAFASYYWALKKPDDLPAFPLFSAFGRALRYHTGS) lie on the Cytoplasmic side of the membrane. Residues 505–525 (LAFGSLLLAIVQIIRVMLEYL) traverse the membrane as a helical segment. The Extracellular portion of the chain corresponds to 526–563 (DQRLKAAENKFAKFLMTCLKCCFWCLEKFIKFLNRNAY). The chain crosses the membrane as a helical span at residues 564 to 584 (IMIAIYGTNFCTSARNAFFLL). Residues 585–599 (MRNIIRVAVLDKVTD) are Cytoplasmic-facing. The helical transmembrane segment at 600 to 620 (FLFLLGKLLIVGSVGILAFFF) threads the bilayer. The Extracellular portion of the chain corresponds to 621–638 (FTHRIRIVQDTAPPLNYY). The chain crosses the membrane as a helical span at residues 639–659 (WVPILTVIVGSYLIAHGFFSV). At 660–706 (YGMCVDTLFLCFLEDLERNDGSMERPYFMSPTLKRLLNKTNRKPAES) the chain is on the cytoplasmic side.

The protein belongs to the CTL (choline transporter-like) family. Interacts with COCH. Post-translationally, N-glycosylated.

It localises to the cell membrane. It is found in the mitochondrion outer membrane. It catalyses the reaction choline(out) + n H(+)(in) = choline(in) + n H(+)(out). The catalysed reaction is ethanolamine(out) + n H(+)(in) = ethanolamine(in) + n H(+)(out). Its function is as follows. Choline/H+ antiporter, mainly in mitochodria. Also acts as a low-affinity ethanolamine/H+ antiporter, regulating the supply of extracellular ethanolamine (Etn) for the CDP-Etn pathway, redistribute intracellular Etn and balance the CDP-Cho and CDP-Etn arms of the Kennedy pathway. This Sus scrofa (Pig) protein is Choline transporter-like protein 2 (SLC44A2).